The primary structure comprises 101 residues: MSQKIRIKLKSYDHNLVDKSAEKIVKTVKTTGAVVTGPIPLPTNKKIFTVLRSPHVNKKSREQFELSSYKRLLDIYSSSSKTIDALMKLELPSGVEVEIKV.

Belongs to the universal ribosomal protein uS10 family. As to quaternary structure, part of the 30S ribosomal subunit.

In terms of biological role, involved in the binding of tRNA to the ribosomes. This chain is Small ribosomal subunit protein uS10, found in Christiangramia forsetii (strain DSM 17595 / CGMCC 1.15422 / KT0803) (Gramella forsetii).